Here is a 253-residue protein sequence, read N- to C-terminus: 3-deoxy-manno-octulosonate cytidylyltransferase (253 aa).

The protein belongs to the KdsB family.

The protein resides in the cytoplasm. It catalyses the reaction 3-deoxy-alpha-D-manno-oct-2-ulosonate + CTP = CMP-3-deoxy-beta-D-manno-octulosonate + diphosphate. Its pathway is nucleotide-sugar biosynthesis; CMP-3-deoxy-D-manno-octulosonate biosynthesis; CMP-3-deoxy-D-manno-octulosonate from 3-deoxy-D-manno-octulosonate and CTP: step 1/1. The protein operates within bacterial outer membrane biogenesis; lipopolysaccharide biosynthesis. Activates KDO (a required 8-carbon sugar) for incorporation into bacterial lipopolysaccharide in Gram-negative bacteria. The sequence is that of 3-deoxy-manno-octulosonate cytidylyltransferase from Haemophilus ducreyi (strain 35000HP / ATCC 700724).